The following is a 389-amino-acid chain: Naringenin-chalcone synthase (389 aa).

The active site involves C164.

It belongs to the thiolase-like superfamily. Chalcone/stilbene synthases family. In terms of tissue distribution, expressed in glandular trichomes. Detected at low levels in female flowers, stems, seeds, leaves and roots.

It localises to the cytoplasm. The catalysed reaction is (E)-4-coumaroyl-CoA + 3 malonyl-CoA + 3 H(+) = 2',4,4',6'-tetrahydroxychalcone + 3 CO2 + 4 CoA. Functionally, chalcone synthase that can also use isovaleryl-CoA, isobutyryl-CoA or hexanoyl-CoA as substrates, but that is unable to produce olivetol or olivetolic acid. The protein is Naringenin-chalcone synthase (CHS) of Cannabis sativa (Hemp).